Consider the following 104-residue polypeptide: Defensin-2 (104 aa).

An N-terminal signal peptide occupies residues 1–19 (MKFFVLFAILIAIVHASCA). 3 disulfides stabilise this stretch: Cys-64–Cys-95, Cys-81–Cys-100, and Cys-85–Cys-102.

The protein belongs to the invertebrate defensin family. Type 1 subfamily. In terms of tissue distribution, low expression in head and thorax.

It localises to the secreted. Functionally, antibacterial peptide mostly active against Gram-positive bacteria. The chain is Defensin-2 from Apis mellifera (Honeybee).